The primary structure comprises 297 residues: Acetylglutamate kinase (297 aa).

Substrate contacts are provided by residues 73–74 (GG), R95, and N188.

This sequence belongs to the acetylglutamate kinase family. ArgB subfamily.

The protein localises to the cytoplasm. It catalyses the reaction N-acetyl-L-glutamate + ATP = N-acetyl-L-glutamyl 5-phosphate + ADP. The protein operates within amino-acid biosynthesis; L-arginine biosynthesis; N(2)-acetyl-L-ornithine from L-glutamate: step 2/4. In terms of biological role, catalyzes the ATP-dependent phosphorylation of N-acetyl-L-glutamate. The polypeptide is Acetylglutamate kinase (Trichormus variabilis (strain ATCC 29413 / PCC 7937) (Anabaena variabilis)).